The following is a 187-amino-acid chain: Elongation factor P (187 aa).

Lysine 34 is modified (N6-(3,6-diaminohexanoyl)-5-hydroxylysine).

It belongs to the elongation factor P family. Post-translationally, may be beta-lysylated on the epsilon-amino group of Lys-34 by the combined action of EpmA and EpmB, and then hydroxylated on the C5 position of the same residue by EpmC (if this protein is present). Lysylation is critical for the stimulatory effect of EF-P on peptide-bond formation. The lysylation moiety may extend toward the peptidyltransferase center and stabilize the terminal 3-CCA end of the tRNA. Hydroxylation of the C5 position on Lys-34 may allow additional potential stabilizing hydrogen-bond interactions with the P-tRNA.

The protein resides in the cytoplasm. It functions in the pathway protein biosynthesis; polypeptide chain elongation. Its function is as follows. Involved in peptide bond synthesis. Alleviates ribosome stalling that occurs when 3 or more consecutive Pro residues or the sequence PPG is present in a protein, possibly by augmenting the peptidyl transferase activity of the ribosome. Modification of Lys-34 is required for alleviation. This is Elongation factor P from Thioalkalivibrio sulfidiphilus (strain HL-EbGR7).